Reading from the N-terminus, the 347-residue chain is Tryptophan--tRNA ligase (347 aa).

ATP contacts are provided by residues 10–12 (QAS) and 18–19 (GN). The 'HIGH' region motif lies at 11 to 19 (ASGRQHLGN). Asp-140 lines the L-tryptophan pocket. ATP contacts are provided by residues 152-154 (GND), Ile-191, and 200-204 (KMSKS). Positions 200–204 (KMSKS) match the 'KMSKS' region motif.

It belongs to the class-I aminoacyl-tRNA synthetase family. In terms of assembly, homodimer.

It localises to the cytoplasm. The enzyme catalyses tRNA(Trp) + L-tryptophan + ATP = L-tryptophyl-tRNA(Trp) + AMP + diphosphate + H(+). In terms of biological role, catalyzes the attachment of tryptophan to tRNA(Trp). The protein is Tryptophan--tRNA ligase of Mycoplasma genitalium (strain ATCC 33530 / DSM 19775 / NCTC 10195 / G37) (Mycoplasmoides genitalium).